We begin with the raw amino-acid sequence, 254 residues long: 5'/3'-nucleotidase SurE (254 aa).

The a divalent metal cation site is built by aspartate 9, aspartate 10, serine 40, and asparagine 93.

This sequence belongs to the SurE nucleotidase family. It depends on a divalent metal cation as a cofactor.

Its subcellular location is the cytoplasm. It carries out the reaction a ribonucleoside 5'-phosphate + H2O = a ribonucleoside + phosphate. The catalysed reaction is a ribonucleoside 3'-phosphate + H2O = a ribonucleoside + phosphate. The enzyme catalyses [phosphate](n) + H2O = [phosphate](n-1) + phosphate + H(+). In terms of biological role, nucleotidase with a broad substrate specificity as it can dephosphorylate various ribo- and deoxyribonucleoside 5'-monophosphates and ribonucleoside 3'-monophosphates with highest affinity to 3'-AMP. Also hydrolyzes polyphosphate (exopolyphosphatase activity) with the preference for short-chain-length substrates (P20-25). Might be involved in the regulation of dNTP and NTP pools, and in the turnover of 3'-mononucleotides produced by numerous intracellular RNases (T1, T2, and F) during the degradation of various RNAs. The protein is 5'/3'-nucleotidase SurE of Proteus mirabilis (strain HI4320).